Reading from the N-terminus, the 1292-residue chain is Myosin-1 (1292 aa).

The Myosin motor domain maps to 35–714 (VGVSDLTLLS…TLFALENMRD (680 aa)). An ATP-binding site is contributed by 128–135 (GESGAGKT). Serine 356 carries the post-translational modification Phosphoserine. An actin-binding region spans residues 403-485 (SIGILDIYGF…PGIFAALNDS (83 aa)). 2 consecutive IQ domains span residues 718-738 (HNMA…RIDS) and 739-764 (AIRI…YGNK). One can recognise a TH1 domain in the interval 770 to 960 (KERRAMSLLG…TIMVRRGRPG (191 aa)). 3 disordered regions span residues 956–991 (RGRP…GHPT), 1017–1180 (YSLN…FPLK), and 1227–1258 (PVAS…SAAT). Residues 1062-1081 (MDNSSAAYGNASALPNSAPS) are compositionally biased toward polar residues. Composition is skewed to pro residues over residues 1087-1121 (ASRP…PMPR) and 1142-1155 (APPP…PPAA). One can recognise an SH3 domain in the interval 1157–1219 (PSEPVYEAAF…PTAYIVESKA (63 aa)). Residues 1240 to 1258 (ATREAGTTSAATAAASAAT) are compositionally biased toward low complexity.

It belongs to the TRAFAC class myosin-kinesin ATPase superfamily. Myosin family. Phosphorylation of the TEDS site (Ser-356) is required for the polarization of the actin cytoskeleton. Phosphorylation probably activates the myosin-I ATPase activity.

It is found in the cytoplasm. It localises to the cytoskeleton. The protein localises to the actin patch. Functionally, type-I myosin implicated in the organization of the actin cytoskeleton. Required for proper actin cytoskeleton polarization. At the cell cortex, assembles in patch-like structures together with proteins from the actin-polymerizing machinery and promotes actin assembly. Functions as actin nucleation-promoting factor (NPF) for the Arp2/3 complex. The protein is Myosin-1 (MYO1) of Eremothecium gossypii (strain ATCC 10895 / CBS 109.51 / FGSC 9923 / NRRL Y-1056) (Yeast).